Consider the following 194-residue polypeptide: Large ribosomal subunit protein bL25B (194 aa).

The protein belongs to the bacterial ribosomal protein bL25 family. CTC subfamily. As to quaternary structure, part of the 50S ribosomal subunit; part of the 5S rRNA/L5/L18/L25 subcomplex. Contacts the 5S rRNA. Binds to the 5S rRNA independently of L5 and L18.

This is one of the proteins that binds to the 5S RNA in the ribosome where it forms part of the central protuberance. The chain is Large ribosomal subunit protein bL25B from Symbiobacterium thermophilum (strain DSM 24528 / JCM 14929 / IAM 14863 / T).